The primary structure comprises 163 residues: Nucleotide-binding protein CJJ81176_0398 (163 aa).

Belongs to the YajQ family.

Nucleotide-binding protein. This is Nucleotide-binding protein CJJ81176_0398 from Campylobacter jejuni subsp. jejuni serotype O:23/36 (strain 81-176).